The following is a 478-amino-acid chain: Putative multidrug resistance outer membrane protein MdtQ (478 aa).

Positions 1-21 (MNRDSFYPAIACFPLLLMLAG) are cleaved as a signal peptide. Residue cysteine 22 is the site of N-palmitoyl cysteine attachment. Cysteine 22 is lipidated: S-diacylglycerol cysteine.

This sequence belongs to the outer membrane factor (OMF) (TC 1.B.17) family.

It localises to the cell outer membrane. Its function is as follows. Could be involved in resistance to puromycin, acriflavine and tetraphenylarsonium chloride. The polypeptide is Putative multidrug resistance outer membrane protein MdtQ (mdtQ) (Shigella flexneri).